The following is a 69-amino-acid chain: Large ribosomal subunit protein eL38 (69 aa).

The protein belongs to the eukaryotic ribosomal protein eL38 family.

The protein is Large ribosomal subunit protein eL38 (RPL38) of Solanum lycopersicum (Tomato).